Here is a 345-residue protein sequence, read N- to C-terminus: Phosphoribosylformylglycinamidine cyclo-ligase (345 aa).

This sequence belongs to the AIR synthase family.

Its subcellular location is the cytoplasm. The catalysed reaction is 2-formamido-N(1)-(5-O-phospho-beta-D-ribosyl)acetamidine + ATP = 5-amino-1-(5-phospho-beta-D-ribosyl)imidazole + ADP + phosphate + H(+). The protein operates within purine metabolism; IMP biosynthesis via de novo pathway; 5-amino-1-(5-phospho-D-ribosyl)imidazole from N(2)-formyl-N(1)-(5-phospho-D-ribosyl)glycinamide: step 2/2. This Bifidobacterium longum subsp. infantis (strain ATCC 15697 / DSM 20088 / JCM 1222 / NCTC 11817 / S12) protein is Phosphoribosylformylglycinamidine cyclo-ligase.